We begin with the raw amino-acid sequence, 126 residues long: MQITLLKGKLHMAKVTQAELWYDGSCAIDEEFVKLAGLREFEQIEIYNVDNGERFSTYVILAEAGSRTISMNGAAARKVQVGDRVIIAAYSQMSEAEADSFKPRLVYLDKDNAVERTTNTIPVQAA.

Serine 25 serves as the catalytic Schiff-base intermediate with substrate; via pyruvic acid. Serine 25 is modified (pyruvic acid (Ser)). Threonine 57 serves as a coordination point for substrate. Tyrosine 58 serves as the catalytic Proton donor. Glycine 73–alanine 75 serves as a coordination point for substrate.

The protein belongs to the PanD family. In terms of assembly, heterooctamer of four alpha and four beta subunits. The cofactor is pyruvate. In terms of processing, is synthesized initially as an inactive proenzyme, which is activated by self-cleavage at a specific serine bond to produce a beta-subunit with a hydroxyl group at its C-terminus and an alpha-subunit with a pyruvoyl group at its N-terminus.

The protein resides in the cytoplasm. It catalyses the reaction L-aspartate + H(+) = beta-alanine + CO2. It functions in the pathway cofactor biosynthesis; (R)-pantothenate biosynthesis; beta-alanine from L-aspartate: step 1/1. In terms of biological role, catalyzes the pyruvoyl-dependent decarboxylation of aspartate to produce beta-alanine. The protein is Aspartate 1-decarboxylase of Saccharophagus degradans (strain 2-40 / ATCC 43961 / DSM 17024).